We begin with the raw amino-acid sequence, 67 residues long: Large ribosomal subunit protein uL29 (67 aa).

The protein belongs to the universal ribosomal protein uL29 family.

This Agathobacter rectalis (strain ATCC 33656 / DSM 3377 / JCM 17463 / KCTC 5835 / VPI 0990) (Eubacterium rectale) protein is Large ribosomal subunit protein uL29.